We begin with the raw amino-acid sequence, 570 residues long: Glycine--tRNA ligase (570 aa).

Residues R99 and E165 each contribute to the substrate site. ATP is bound by residues 197–199, 207–212, 324–325, and 443–446; these read RNE, LRLREF, EC, and GIDR. 212–216 is a binding site for substrate; that stretch reads FSQAE. 439 to 443 contributes to the substrate binding site; sequence EPSFG.

The protein belongs to the class-II aminoacyl-tRNA synthetase family.

It localises to the cytoplasm. It catalyses the reaction tRNA(Gly) + glycine + ATP = glycyl-tRNA(Gly) + AMP + diphosphate. In terms of biological role, catalyzes the attachment of glycine to tRNA(Gly). This is Glycine--tRNA ligase from Thermococcus sibiricus (strain DSM 12597 / MM 739).